Consider the following 357-residue polypeptide: Peptide chain release factor 1 (357 aa).

Position 235 is an N5-methylglutamine (Gln235). Positions 285–305 are disordered; it reads KRHNEASAMRSAQVGSGDRSE.

The protein belongs to the prokaryotic/mitochondrial release factor family. Methylated by PrmC. Methylation increases the termination efficiency of RF1.

It localises to the cytoplasm. Peptide chain release factor 1 directs the termination of translation in response to the peptide chain termination codons UAG and UAA. This is Peptide chain release factor 1 (prfA) from Chlamydia pneumoniae (Chlamydophila pneumoniae).